The sequence spans 659 residues: Crossover junction endonuclease MUS81 (659 aa).

Positions 59 to 78 (KDLSQIKGFGKWMVKLMKGY) match the Helix-hairpin-helix motif 1 motif. An ERCC4 domain is found at 404–503 (ILILDDREKF…KKLIYILEGD (100 aa)). A Helix-hairpin-helix motif 2 motif is present at residues 585-622 (TISDVFAIQLMQVPQVTEEIAIAVLDMYPTLLSLASAY).

It belongs to the XPF family. Forms a heterodimer with EME1A or EME1B. The cofactor is Mg(2+). Requires Ca(2+) as cofactor. As to expression, ubiquitous but preferentially expressed in young flowers buds, notably in anthers.

It localises to the nucleus. Its subcellular location is the nucleolus. In terms of biological role, interacts with EME1 to form a DNA structure-specific endonuclease with substrate preference for branched DNA structures with a 5'-end at the branch nick. Typical substrates include 3'-flap structures, D-loops, replication forks, nicked Holliday junctions and also intact Holliday junctions with a reduced efficiency. May be required in mitosis for the processing of stalled or collapsed replication fork intermediates. Plays a role in DNA repair and in genotoxic stress-induced homologous recombination (HR) in somatic cells. Mediates a subset of meiotic recombination events that are insensitive to crossover interference. Together with SEND1, essential for the resolution of toxic replication structures to ensure genome stability, and to maintain telomere integrity and replication. The polypeptide is Crossover junction endonuclease MUS81 (Arabidopsis thaliana (Mouse-ear cress)).